Here is a 342-residue protein sequence, read N- to C-terminus: Probable alcohol acetyltransferase (342 aa).

A mitochondrion-targeting transit peptide spans 1 to 38; it reads MMILGKAGILAQYGTIYVRQNTIRNNLSSCIFKQSLCA. Positions 39–46 are cleaved as a propeptide — removed in mature form; it reads FHSLAKVL. Residues 75–326 enclose the AB hydrolase-1 domain; that stretch reads PPIIILHGLF…AGHWVNAEKP (252 aa). Catalysis depends on charge relay system residues S152 and H319.

This sequence belongs to the AB hydrolase superfamily. Post-translationally, processed by both the mitochondrial processing peptidase (MPP) and the mitochondrial octapeptidyl aminopeptidase (OCT1).

It is found in the mitochondrion. Its function is as follows. Probable alcohol acetyltransferase that uses acetyl-CoA to synthesize acetate esters from various alcohols. Not involved in the synthesis of ethyl acetate. The sequence is that of Probable alcohol acetyltransferase (IMO32) from Saccharomyces cerevisiae (strain ATCC 204508 / S288c) (Baker's yeast).